A 675-amino-acid chain; its full sequence is DNA ligase (675 aa).

Residues aspartate 34–aspartate 38, serine 83–leucine 84, and glutamate 117 contribute to the NAD(+) site. The active-site N6-AMP-lysine intermediate is the lysine 119. The NAD(+) site is built by arginine 140, glutamate 184, lysine 297, and lysine 321. Cysteine 415, cysteine 418, cysteine 433, and cysteine 439 together coordinate Zn(2+). The region spanning leucine 598 to phenylalanine 675 is the BRCT domain.

Belongs to the NAD-dependent DNA ligase family. LigA subfamily. It depends on Mg(2+) as a cofactor. Requires Mn(2+) as cofactor.

It catalyses the reaction NAD(+) + (deoxyribonucleotide)n-3'-hydroxyl + 5'-phospho-(deoxyribonucleotide)m = (deoxyribonucleotide)n+m + AMP + beta-nicotinamide D-nucleotide.. Its function is as follows. DNA ligase that catalyzes the formation of phosphodiester linkages between 5'-phosphoryl and 3'-hydroxyl groups in double-stranded DNA using NAD as a coenzyme and as the energy source for the reaction. It is essential for DNA replication and repair of damaged DNA. This is DNA ligase from Prosthecochloris aestuarii (strain DSM 271 / SK 413).